Reading from the N-terminus, the 410-residue chain is BTB/POZ and MATH domain-containing protein 5 (410 aa).

Residues 1 to 24 (MSESVIQGSNPDRVLSPTSSKSVT) are disordered. An MATH domain is found at 28–162 (NGSHQFVIQG…DDCLIINCTV (135 aa)). Positions 198–264 (SDITFNIAGE…MYKDSLPEDV (67 aa)) constitute a BTB domain.

This sequence belongs to the Tdpoz family. Heterodimer with BPM1 and BPM3. Interacts with RAP2-4. Binds to MYB56 at the promoter of FLOWERING LOCUS T (FT). In terms of tissue distribution, ubiquitous.

The protein resides in the nucleus. It is found in the cytoplasm. Its pathway is protein modification; protein ubiquitination. Its function is as follows. May act as a substrate-specific adapter of an E3 ubiquitin-protein ligase complex (CUL3-RBX1-BTB) which mediates the ubiquitination and subsequent proteasomal degradation of target proteins. In Arabidopsis thaliana (Mouse-ear cress), this protein is BTB/POZ and MATH domain-containing protein 5 (BPM5).